A 756-amino-acid polypeptide reads, in one-letter code: U3 small nucleolar RNA-associated protein 14 homolog B (756 aa).

Residues D21 to Q44 form a disordered region. 3 positions are modified to phosphoserine: S29, S31, and S37. 2 coiled-coil regions span residues S215–K244 and P316–E345. Composition is skewed to basic and acidic residues over residues K419–D428 and L452–E468. Disordered stretches follow at residues K419–E468 and Q497–K539. Residues L449–E476 adopt a coiled-coil conformation. At S554 the chain carries Phosphoserine.

The protein belongs to the UTP14 family. In terms of tissue distribution, expressed predominantly in germ cells of the testis; weakly expressed in brain.

It localises to the nucleus. The protein localises to the nucleolus. In terms of biological role, essential for spermatogenesis. May be required specifically for ribosome biogenesis and hence protein synthesis during male meiosis. The sequence is that of U3 small nucleolar RNA-associated protein 14 homolog B (Utp14b) from Mus musculus (Mouse).